The following is a 917-amino-acid chain: Spermatogenesis-associated protein 31D4 (917 aa).

A helical transmembrane segment spans residues 29 to 49 (FICLSGLGLFILYLFYMVLTL). 3 disordered regions span residues 55-80 (EKNN…KDRK), 152-195 (SVSP…PPPL), and 773-798 (SQET…RSNS). Positions 63 to 74 (HQGRARRKRKSV) are enriched in basic residues. Residues 152 to 163 (SVSPLASSASGA) are compositionally biased toward low complexity. The span at 164–177 (ESSFTLASTPSATT) shows a compositional bias: polar residues. The segment covering 782-798 (LLHDPETSSDEDLRSNS) has biased composition (basic and acidic residues).

The protein belongs to the SPATA31 family.

The protein localises to the membrane. Functionally, may play a role in spermatogenesis. This is Spermatogenesis-associated protein 31D4 (SPATA31D4) from Homo sapiens (Human).